Reading from the N-terminus, the 100-residue chain is Large ribosomal subunit protein uL23 (100 aa).

Belongs to the universal ribosomal protein uL23 family. Part of the 50S ribosomal subunit. Contacts protein L29, and trigger factor when it is bound to the ribosome.

Its function is as follows. One of the early assembly proteins it binds 23S rRNA. One of the proteins that surrounds the polypeptide exit tunnel on the outside of the ribosome. Forms the main docking site for trigger factor binding to the ribosome. The sequence is that of Large ribosomal subunit protein uL23 from Photorhabdus laumondii subsp. laumondii (strain DSM 15139 / CIP 105565 / TT01) (Photorhabdus luminescens subsp. laumondii).